A 492-amino-acid polypeptide reads, in one-letter code: Bifunctional shikimate kinase/3-dehydroquinate synthase (492 aa).

The segment at 1–161 (MRIFLVGMMG…TALVVLEALD (161 aa)) is shikimate kinase. 10–15 (GSGKST) provides a ligand contact to ATP. Residue Ser14 coordinates Mg(2+). Substrate contacts are provided by Asp32, Arg56, and Gly78. Residue Arg114 participates in ATP binding. Residue Arg131 participates in substrate binding. The segment at 162 to 492 (EKEISTIEKP…DPLELLEVVD (331 aa)) is 3-dehydroquinate synthase.

This sequence in the N-terminal section; belongs to the shikimate kinase family. In the C-terminal section; belongs to the sugar phosphate cyclases superfamily. Dehydroquinate synthase family. Requires Mg(2+) as cofactor. NAD(+) is required as a cofactor. The cofactor is a divalent metal cation.

It localises to the cytoplasm. It catalyses the reaction 7-phospho-2-dehydro-3-deoxy-D-arabino-heptonate = 3-dehydroquinate + phosphate. The enzyme catalyses shikimate + ATP = 3-phosphoshikimate + ADP + H(+). It functions in the pathway metabolic intermediate biosynthesis; chorismate biosynthesis; chorismate from D-erythrose 4-phosphate and phosphoenolpyruvate: step 2/7. Its pathway is metabolic intermediate biosynthesis; chorismate biosynthesis; chorismate from D-erythrose 4-phosphate and phosphoenolpyruvate: step 5/7. Catalyzes the specific phosphorylation of the 3-hydroxyl group of shikimic acid using ATP as a cosubstrate. The polypeptide is Bifunctional shikimate kinase/3-dehydroquinate synthase (aroKB) (Thermotoga maritima (strain ATCC 43589 / DSM 3109 / JCM 10099 / NBRC 100826 / MSB8)).